The sequence spans 310 residues: L-lactate dehydrogenase (310 aa).

Residues Met10 to Val11, Asp32, Tyr62, and Gly76 to Val77 each bind NAD(+). Residues Gln79, Arg85, and Asn117–Asp120 each bind substrate. NAD(+) contacts are provided by residues Ala115–Asn117 and Ser140. A substrate-binding site is contributed by Asp145–Arg148. Positions 150 and 165 each coordinate beta-D-fructose 1,6-bisphosphate. Catalysis depends on His172, which acts as the Proton acceptor. Tyr218 carries the post-translational modification Phosphotyrosine. Thr227 serves as a coordination point for substrate.

It belongs to the LDH/MDH superfamily. LDH family. As to quaternary structure, homotetramer.

The protein resides in the cytoplasm. The enzyme catalyses (S)-lactate + NAD(+) = pyruvate + NADH + H(+). The protein operates within fermentation; pyruvate fermentation to lactate; (S)-lactate from pyruvate: step 1/1. Its activity is regulated as follows. Allosterically activated by fructose 1,6-bisphosphate (FBP). Its function is as follows. Catalyzes the conversion of lactate to pyruvate. This chain is L-lactate dehydrogenase, found in Thermus thermophilus (strain ATCC 27634 / DSM 579 / HB8).